The sequence spans 565 residues: Deformed epidermal autoregulatory factor 1 homolog (565 aa).

Disordered regions lie at residues 34–62 (GGEA…ETPR) and 162–190 (GLKG…KGGT). Pro residues predominate over residues 169 to 181 (PLTPGPQSPPTPL). Threonine 171 is subject to Phosphothreonine. Serine 176 is subject to Phosphoserine. Position 179 is a phosphothreonine (threonine 179). Residues 193-273 (NWDPSVYDSE…QCLIQDGILN (81 aa)) form the SAND domain. A Nuclear localization signal motif is present at residues 301-316 (KRRKKENELPTTPVKK). Residues 403–478 (IAPFPEAALP…QLKTLFEQAK (76 aa)) form an interaction with LMO4 region. Phosphothreonine is present on threonine 432. Residue serine 448 is modified to Phosphoserine. The Zn(2+) site is built by cysteine 504, cysteine 507, cysteine 515, cysteine 518, cysteine 524, cysteine 528, histidine 536, and cysteine 540. An MYND-type zinc finger spans residues 504–540 (CVNCGREAMNECTGCHKVNYCSTFCQRKDWKDHQHIC).

In terms of assembly, homodimer. Interacts with LMO4; LMO4 blocks export from nucleus. Interacts with LMO2 and CLIM2. May interact with the corepressors NCOR1 and NCRO2. Identified in a complex with XRCC5 and XRCC6. Interacts (via the SAND domain) with the DNA-PK complex subunit XRCC6; the interaction is direct and may be inhibited by DNA-binding. In terms of processing, may be phosphorylated by DNA-PK complex in a DNA independent manner (in vitro).

Its subcellular location is the nucleus. Functionally, transcription factor that binds to sequence with multiple copies of 5'-TTC[CG]G-3' present in its own promoter and that of the HNRPA2B1 gene. Down-regulates transcription of these genes. Binds to the retinoic acid response element (RARE) 5'-AGGGTTCACCGAAAGTTCA-3'. Activates the proenkephalin gene independently of promoter binding, probably through protein-protein interaction. Regulates epithelial cell proliferation and side-branching in the mammary gland. Required for neural tube closure and skeletal patterning. Controls the expression of peripheral tissue antigens in pancreatic lymph nodes. Transcriptional activator of EIF4G3. May also involved in behavior. This chain is Deformed epidermal autoregulatory factor 1 homolog (DEAF1), found in Pan troglodytes (Chimpanzee).